A 534-amino-acid chain; its full sequence is Protein tweety homolog 2 (534 aa).

The Extracellular portion of the chain corresponds to 1–44 (MATARVEYIAPWWVYWLHNLPHVDFSLQRESGDFNPKDPGYQQT). A helical membrane pass occupies residues 45–65 (LLFVALFIALCAAVNLLFVSG). Residues 66-87 (YLICLCCCKKEDETETKMTSSC) are Cytoplasmic-facing. The helical transmembrane segment at 88-108 (CVTWTAAVSGLLCCAAVGIGF) threads the bilayer. At 109 to 213 (YGNSETNDGV…NASIIEYYRW (105 aa)) the chain is on the extracellular side. Residues glutamate 113 and aspartate 116 each contribute to the Ca(2+) site. An N-linked (GlcNAc...) asparagine glycan is attached at asparagine 129. The RGD motif lies at 164–166 (RGD). N-linked (GlcNAc...) asparagine glycosylation is found at asparagine 197 and asparagine 204. A helical membrane pass occupies residues 214–234 (LSYLILFITDVVICLVTCLGL). The Cytoplasmic portion of the chain corresponds to 235-240 (AKKSKC). The chain crosses the membrane as a helical span at residues 241 to 261 (LLLTMLCCGLIALMLSWASLA). The Extracellular segment spans residues 262 to 388 (LETSSAVGTS…IGICYDGVEG (127 aa)). 2 disulfide bridges follow: cysteine 274–cysteine 382 and cysteine 300–cysteine 367. N-linked (GlcNAc...) asparagine glycosylation is present at asparagine 352. A helical membrane pass occupies residues 389–409 (LLYLSLFSLLAAVAFTAMVCA). Over 410 to 534 (MPRAWKHLAA…PNIYSNVFPA (125 aa)) the chain is Cytoplasmic.

Belongs to the tweety family. In terms of assembly, forms cis-homodimers in the presence of Ca(+2) and forms monomers and trans-dimers in the absence of Ca(2+).

Its subcellular location is the cell membrane. It catalyses the reaction chloride(in) = chloride(out). It carries out the reaction L-glutamate(out) = L-glutamate(in). Functionally, may act as a calcium-independent, swelling-dependent volume-regulated anion channel (VRAC-swell) which plays a pivotal role in the process of regulatory volume decrease (RVD) in the brain through the efflux of anions like chloride and organic osmolytes like glutamate. Probable large-conductance Ca(2+)-activated chloride channel. This Xenopus laevis (African clawed frog) protein is Protein tweety homolog 2 (ttyh2).